A 159-amino-acid polypeptide reads, in one-letter code: Transcription elongation factor GreA (159 aa).

Residues 45–67 (NAEYHEARKEQSFVEGKIRELQL) adopt a coiled-coil conformation.

The protein belongs to the GreA/GreB family.

Its function is as follows. Necessary for efficient RNA polymerase transcription elongation past template-encoded arresting sites. The arresting sites in DNA have the property of trapping a certain fraction of elongating RNA polymerases that pass through, resulting in locked ternary complexes. Cleavage of the nascent transcript by cleavage factors such as GreA or GreB allows the resumption of elongation from the new 3'terminus. GreA releases sequences of 2 to 3 nucleotides. The chain is Transcription elongation factor GreA from Neorickettsia sennetsu (strain ATCC VR-367 / Miyayama) (Ehrlichia sennetsu).